The following is a 176-amino-acid chain: ATP synthase subunit delta (176 aa).

Belongs to the ATPase delta chain family. In terms of assembly, F-type ATPases have 2 components, F(1) - the catalytic core - and F(0) - the membrane proton channel. F(1) has five subunits: alpha(3), beta(3), gamma(1), delta(1), epsilon(1). F(0) has three main subunits: a(1), b(2) and c(10-14). The alpha and beta chains form an alternating ring which encloses part of the gamma chain. F(1) is attached to F(0) by a central stalk formed by the gamma and epsilon chains, while a peripheral stalk is formed by the delta and b chains.

Its subcellular location is the cell inner membrane. F(1)F(0) ATP synthase produces ATP from ADP in the presence of a proton or sodium gradient. F-type ATPases consist of two structural domains, F(1) containing the extramembraneous catalytic core and F(0) containing the membrane proton channel, linked together by a central stalk and a peripheral stalk. During catalysis, ATP synthesis in the catalytic domain of F(1) is coupled via a rotary mechanism of the central stalk subunits to proton translocation. Functionally, this protein is part of the stalk that links CF(0) to CF(1). It either transmits conformational changes from CF(0) to CF(1) or is implicated in proton conduction. This chain is ATP synthase subunit delta, found in Wolinella succinogenes (strain ATCC 29543 / DSM 1740 / CCUG 13145 / JCM 31913 / LMG 7466 / NCTC 11488 / FDC 602W) (Vibrio succinogenes).